The sequence spans 1013 residues: Mediator of RNA polymerase II transcription subunit 5 (1013 aa).

This sequence belongs to the Mediator complex subunit 5 family. Component of the Mediator complex.

It is found in the nucleus. Functionally, component of the Mediator complex, a coactivator involved in the regulated transcription of nearly all RNA polymerase II-dependent genes. Mediator functions as a bridge to convey information from gene-specific regulatory proteins to the basal RNA polymerase II transcription machinery. Mediator is recruited to promoters by direct interactions with regulatory proteins and serves as a scaffold for the assembly of a functional preinitiation complex with RNA polymerase II and the general transcription factors. This is Mediator of RNA polymerase II transcription subunit 5 (NUT1) from Aspergillus oryzae (strain ATCC 42149 / RIB 40) (Yellow koji mold).